The primary structure comprises 100 residues: MTERFNDRLADVIRRPLITEKATSALEQNQYTFEVDHRAAKPDIKAAVEQLFDVRVVGISTMNPPRRSRRVGRFTGKRAQVKKAIVRLAEGNTIQLFPES.

It belongs to the universal ribosomal protein uL23 family. As to quaternary structure, part of the 50S ribosomal subunit. Contacts protein L29, and trigger factor when it is bound to the ribosome.

One of the early assembly proteins it binds 23S rRNA. One of the proteins that surrounds the polypeptide exit tunnel on the outside of the ribosome. Forms the main docking site for trigger factor binding to the ribosome. This is Large ribosomal subunit protein uL23 from Prochlorococcus marinus (strain MIT 9313).